The following is a 457-amino-acid chain: L-asparaginase-like protein GA18140 (457 aa).

A signal peptide spans 1-20 (MRYLCRAQLLSLLLLPLLKA). 3 cysteine pairs are disulfide-bonded: cysteine 72/cysteine 78, cysteine 172/cysteine 188, and cysteine 327/cysteine 354.

Belongs to the Ntn-hydrolase family.

In Drosophila pseudoobscura pseudoobscura (Fruit fly), this protein is L-asparaginase-like protein GA18140.